The sequence spans 599 residues: Subtilisin-like protease 1 (599 aa).

A signal peptide spans 1 to 20 (MRTVFIYACIISLVLRTIPA). The propeptide at 21–195 (HNDLMSKEKE…VESDELVGAD (175 aa)) is inhibition peptide. A glycan (N-linked (GlcNAc...) asparagine) is linked at Asn-57. Residues 74–101 (EDAPKEELNKIEMEKKKAEEEAKNSKKK) adopt a coiled-coil conformation. Ca(2+)-binding residues include Asn-123, Thr-126, Pro-128, and Gly-183. The N-linked (GlcNAc...) asparagine glycan is linked to Asn-227. Asp-251 lines the Ca(2+) pocket. Residues 257-574 (QWGLDLARLD…GGYIDILNAV (318 aa)) enclose the Peptidase S8 domain. 2 disulfides stabilise this stretch: Cys-283–Cys-393 and Cys-372–Cys-389. Asp-286 serves as the catalytic Charge relay system. Residues Asp-295, Glu-306, Asp-314, Asp-315, Asp-316, Asn-318, Ile-320, Asp-322, and Asp-323 each coordinate Ca(2+). An N-linked (GlcNAc...) asparagine glycan is attached at Asn-331. His-342 (charge relay system) is an active-site residue. Ile-353 contributes to the Ca(2+) binding site. Asn-355 is a glycosylation site (N-linked (GlcNAc...) asparagine). Ca(2+) contacts are provided by Asn-356, Ile-358, and Val-360. N-linked (GlcNAc...) asparagine glycans are attached at residues Asn-402 and Asn-434. Cys-435 and Cys-448 form a disulfide bridge. Residue Ser-519 is the Charge relay system of the active site.

This sequence belongs to the peptidase S8 family. The N-terminal prodomain is cleaved.

It localises to the secreted. The protein resides in the parasitophorous vacuole lumen. It is found in the cytoplasmic vesicle. The protein localises to the secretory vesicle. It carries out the reaction Hydrolysis of proteins with broad specificity for peptide bonds, and a preference for a large uncharged residue in P1. Hydrolyzes peptide amides.. Functionally, mediates the proteolytic maturation of serine protease SERA3. Mediates the proteolytic maturation of MSP1, and thereby may prime the parasite cell surface for invasion of fresh erythrocytes. Required for completion of the parasite pre-erythrocytic stages. Required for hepatic schizont development and merozoite formation. Required for the egress of the hepatic merozoites from the parasitophorous vacuole. Required for parasite infectivity during blood stages. Required for male gamete egress. The polypeptide is Subtilisin-like protease 1 (Plasmodium berghei (strain Anka)).